The primary structure comprises 345 residues: Flap endonuclease 1 (345 aa).

An N-domain region spans residues 1–103 (MGIKQLSKLL…KELEKRKERR (103 aa)). Aspartate 34 is a Mg(2+) binding site. 2 residues coordinate DNA: arginine 47 and arginine 69. Mg(2+)-binding residues include aspartate 85, glutamate 157, glutamate 159, aspartate 178, and aspartate 180. The interval 121 to 252 (LMEMYDKRKT…KKALGLIKKH (132 aa)) is I-domain. Residue glutamate 157 participates in DNA binding. Glycine 230 and aspartate 232 together coordinate DNA. Mg(2+) is bound at residue aspartate 232. The interval 333-341 (TQGRLDCFI) is interaction with PCNA.

It belongs to the XPG/RAD2 endonuclease family. FEN1 subfamily. Interacts with PCNA. Three molecules of FEN1 bind to one PCNA trimer with each molecule binding to one PCNA monomer. PCNA stimulates the nuclease activity without altering cleavage specificity. It depends on Mg(2+) as a cofactor. In terms of processing, phosphorylated. Phosphorylation upon DNA damage induces relocalization to the nuclear plasma.

The protein resides in the nucleus. The protein localises to the nucleolus. Its subcellular location is the nucleoplasm. It localises to the mitochondrion. Its function is as follows. Structure-specific nuclease with 5'-flap endonuclease and 5'-3' exonuclease activities involved in DNA replication and repair. During DNA replication, cleaves the 5'-overhanging flap structure that is generated by displacement synthesis when DNA polymerase encounters the 5'-end of a downstream Okazaki fragment. It enters the flap from the 5'-end and then tracks to cleave the flap base, leaving a nick for ligation. Also involved in the long patch base excision repair (LP-BER) pathway, by cleaving within the apurinic/apyrimidinic (AP) site-terminated flap. Acts as a genome stabilization factor that prevents flaps from equilibrating into structures that lead to duplications and deletions. Also possesses 5'-3' exonuclease activity on nicked or gapped double-stranded DNA, and exhibits RNase H activity. Also involved in replication and repair of rDNA and in repairing mitochondrial DNA. In Encephalitozoon cuniculi (strain GB-M1) (Microsporidian parasite), this protein is Flap endonuclease 1.